The following is a 317-amino-acid chain: Peptidyl-prolyl cis-trans isomerase CYP26-2, chloroplastic (317 aa).

A disordered region spans residues 1 to 37 (MMQPNAKLLSPSAKFLPSPIEPPQHNRRTTVGAPPSL). One can recognise a PPIase cyclophilin-type domain in the interval 95-311 (FIDVSIDGEP…SKVVVTNCGL (217 aa)).

The protein belongs to the cyclophilin-type PPIase family. Ubiquitous. Lower levels of expression in roots.

The protein resides in the plastid. The protein localises to the chloroplast thylakoid. It carries out the reaction [protein]-peptidylproline (omega=180) = [protein]-peptidylproline (omega=0). Its function is as follows. PPIases accelerate the folding of proteins. It catalyzes the cis-trans isomerization of proline imidic peptide bonds in oligopeptides. In Arabidopsis thaliana (Mouse-ear cress), this protein is Peptidyl-prolyl cis-trans isomerase CYP26-2, chloroplastic (CYP26-2).